We begin with the raw amino-acid sequence, 136 residues long: uncharacterized protein (136 aa).

2 disordered regions span residues 58 to 82 (TSDDDEKPGNSKIKSHTDQPPTTQT) and 112 to 136 (NNPKIKTNNPNEEFENTGADSVVTQ).

This is an uncharacterized protein from Dictyostelium discoideum (Social amoeba).